The chain runs to 138 residues: Large ribosomal subunit protein uL14 (138 aa).

Belongs to the universal ribosomal protein uL14 family. Part of the 50S ribosomal subunit. Forms a cluster with proteins L3 and L24e, part of which may contact the 16S rRNA in 2 intersubunit bridges. Contacts initiation factor aIF-6.

It is found in the cytoplasm. Functionally, binds to 23S rRNA. Forms part of two intersubunit bridges in the 70S ribosome. This Saccharolobus solfataricus (strain ATCC 35092 / DSM 1617 / JCM 11322 / P2) (Sulfolobus solfataricus) protein is Large ribosomal subunit protein uL14.